We begin with the raw amino-acid sequence, 35 residues long: Cupiennin-2d (35 aa).

Residue Gln-35 is modified to Glutamine amide.

In terms of tissue distribution, expressed by the venom gland.

Its subcellular location is the secreted. In Cupiennius salei (American wandering spider), this protein is Cupiennin-2d.